A 553-amino-acid chain; its full sequence is MKLGSSRAGPGRGSAGLLPGVHELPMGIPAPWGTSPLSFHRKCSLWAPGRPFLTLVLLVSIKQVTGSLLEETTRKWAQYKQACLRDLLKEPSGIFCNGTFDQYVCWPHSSPGNVSVPCPSYLPWWSEESSGRAYRHCLAQGTWQTIENATDIWQDDSECSENHSFKQNVDRYALLSTLQLMYTVGYSFSLISLFLALTLLLFLRKLHCTRNYIHMNLFASFILRTLAVLVKDVVFYNSYSKRPDNENGWMSYLSEMSTSCRSVQVLLHYFVGANYLWLLVEGLYLHTLLEPTVLPERRLWPRYLLLGWAFPVLFVVPWGFARAHLENTGCWTTNGNKKIWWIIRGPMMLCVTVNFFIFLKILKLLISKLKAHQMCFRDYKYRLAKSTLVLIPLLGVHEILFSFITDDQVEGFAKLIRLFIQLTLSSFHGFLVALQYGFANGEVKAELRKYWVRFLLARHSGCRACVLGKDFRFLGKCPKKLSEGDGAEKLRKLQPSLNSGRLLHLAMRGLGELGAQPQQDHARWPRGSSLSECSEGDVTMANTMEEILEESEI.

Residues 1–173 lie on the Extracellular side of the membrane; the sequence is MKLGSSRAGP…SFKQNVDRYA (173 aa). Intrachain disulfides connect Cys-83–Cys-105, Cys-96–Cys-137, and Cys-118–Cys-159. N-linked (GlcNAc...) asparagine glycans are attached at residues Asn-97, Asn-113, Asn-148, and Asn-162. A helical membrane pass occupies residues 174-198; the sequence is LLSTLQLMYTVGYSFSLISLFLALT. The Cytoplasmic portion of the chain corresponds to 199 to 210; sequence LLLFLRKLHCTR. A helical transmembrane segment spans residues 211 to 235; that stretch reads NYIHMNLFASFILRTLAVLVKDVVF. Residues 236–261 are Extracellular-facing; that stretch reads YNSYSKRPDNENGWMSYLSEMSTSCR. Residues 262–285 form a helical membrane-spanning segment; sequence SVQVLLHYFVGANYLWLLVEGLYL. Over 286-299 the chain is Cytoplasmic; it reads HTLLEPTVLPERRL. The chain crosses the membrane as a helical span at residues 300-321; that stretch reads WPRYLLLGWAFPVLFVVPWGFA. Topologically, residues 322–339 are extracellular; that stretch reads RAHLENTGCWTTNGNKKI. The helical transmembrane segment at 340–362 threads the bilayer; it reads WWIIRGPMMLCVTVNFFIFLKIL. The Cytoplasmic portion of the chain corresponds to 363–386; the sequence is KLLISKLKAHQMCFRDYKYRLAKS. A helical transmembrane segment spans residues 387–405; that stretch reads TLVLIPLLGVHEILFSFIT. Residues 406–417 lie on the Extracellular side of the membrane; the sequence is DDQVEGFAKLIR. Residues 418–438 form a helical membrane-spanning segment; that stretch reads LFIQLTLSSFHGFLVALQYGF. Residues 439 to 550 lie on the Cytoplasmic side of the membrane; that stretch reads ANGEVKAELR…ANTMEEILEE (112 aa).

Belongs to the G-protein coupled receptor 2 family.

Its subcellular location is the cell membrane. In terms of biological role, this is a receptor for glucagon-like peptide 2. The activity of this receptor is mediated by G proteins which activate adenylyl cyclase. The protein is Glucagon-like peptide 2 receptor (GLP2R) of Homo sapiens (Human).